Reading from the N-terminus, the 375-residue chain is Protein NDRG3 (375 aa).

Positions 326–375 are disordered; sequence RSRTHSASSSGSMEIPRSRSHTSNAQLKSSSNNSLSNQIQETPQTIELSC. Over residues 348–363 the composition is skewed to low complexity; sequence SNAQLKSSSNNSLSNQ. The span at 364 to 375 shows a compositional bias: polar residues; sequence IQETPQTIELSC.

It belongs to the NDRG family.

In Xenopus laevis (African clawed frog), this protein is Protein NDRG3.